The following is a 5478-amino-acid chain: Mucin-12 (5478 aa).

An N-terminal signal peptide occupies residues 1–16 (MLVIWILTLALRLCAS). Topologically, residues 17–5380 (VTTVTPEGSA…EFNIAKSLVY (5364 aa)) are extracellular. 3 N-linked (GlcNAc...) asparagine glycosylation sites follow: Asn-154, Asn-170, and Asn-176. Positions 212 to 737 (LDSSTNSGHS…GSTETTLLPD (526 aa)) are disordered. Copy 1 of the repeat occupies 222-240 (EESTVSHSGPGATGTTLFP). A 28 X 19 AA approximate tandem repeats of E-E-S-X-X-X-H-X-X-P-X-X-T-X-T-X-X-X-P region spans residues 222–4761 (EESTVSHSGP…PGSTQTMHFP (4540 aa)). Composition is skewed to polar residues over residues 226–246 (VSHSGPGATGTTLFPSHSATS), 255–288 (SPITSASMETTALPGSTTTAGLSEKSTTFYSSPR), 296–313 (PARTTSSGVSEKSTTSHS), and 325–342 (DSTTMPGVSQESTASHSI). Positions 343–366 (PGSTDTTLSPGTTTPSSLGPESTT) are enriched in low complexity. Residues 367 to 387 (FHSSPGYTKTTRLPDNTTTSG) are compositionally biased toward polar residues. A glycan (N-linked (GlcNAc...) asparagine) is linked at Asn-382. A compositionally biased stretch (low complexity) spans 396–413 (HSSTGSPHTTLSPSSSTT). Positions 419 to 440 (TTFQSWPSSKDTSPAPSGTTSA) are enriched in polar residues. Composition is skewed to low complexity over residues 445-466 (STTYHSSPSSTPTTHFSASSTT) and 478-495 (SSPVATATTPPPARSATS). Repeat copies occupy residues 471–489 (EESTPVHSSPVATATTPPP) and 499–517 (EESTAYHRSPGSTQTMHFP). Over residues 531–554 (TFHGSTTHTKSSTPSTTAALAHTS) the composition is skewed to low complexity. Composition is skewed to polar residues over residues 555 to 575 (YHSSLGSTETTHFRDSSTISG) and 608 to 648 (STPS…SPDT). Over residues 654–669 (SMTSSGVSEESTTSHS) the composition is skewed to low complexity. Repeat 4 spans residues 662-680 (EESTTSHSRPGSTHTTAFP). Polar residues-rich tracts occupy residues 670 to 715 (RPGS…TASS) and 722 to 737 (TFHSRPGSTETTLLPD). The N-linked (GlcNAc...) asparagine glycan is linked to Asn-738. 4 disordered regions span residues 749-4847 (MPVH…HFTT), 4887-5034 (SSRS…THTV), 5048-5071 (STAFHSSSDATGTTPLPARSTASD), and 5093-5112 (ASSSTSGLTEESTTFHTSPS). Polar residues-rich tracts occupy residues 751-783 (VHSSTRSPHTTLSPAGSTTRQGESTTFHSWPSS) and 792-842 (TTTS…TQTM). Repeat 5 spans residues 827-845 (EESTTYHSSPGSTQTMHFP). The segment covering 859–877 (TSHSSTTHTISSAPSTTSA) has biased composition (low complexity). Polar residues-rich tracts occupy residues 884–899 (SYHSSPGSTATTHFPD) and 928–970 (RSTT…TTFH). The segment covering 971 to 1007 (SSPRSPATTLSPASTTSSGVSEESTTSRSRPGSTHTT) has biased composition (low complexity). Residues 1009–1021 (FPDSTTTPGLSRH) are compositionally biased toward polar residues. A compositionally biased stretch (low complexity) spans 1022-1065 (STTSHSSPGSTDTTLLPASTTTSGPSQESTTSHSSSGSTDTALS). Polar residues-rich tracts occupy residues 1066-1101 (PGSTTALSFGQESTTFHSNPGSTHTTLFPDSTTSSG) and 1108-1138 (RVHSSTGSPRTTLSPASSTSPGLQGESTAFQ). Positions 1139 to 1157 (THPASTHTTPSPPSTATAP) are enriched in low complexity. The stretch at 1159-1177 (EESTTYHRSPGSTPTTHFP) is repeat 6. Polar residues-rich tracts occupy residues 1160-1184 (ESTTYHRSPGSTPTTHFPASSTTSG) and 1191-1207 (IFHSSPDASGTTPSSAH). 3 stretches are compositionally biased toward low complexity: residues 1208–1220 (STTSGRGESTTSR), 1229–1241 (TTLPGSTTTPGLS), and 1249–1262 (SSPRSPTTTLSPAS). 3 stretches are compositionally biased toward polar residues: residues 1271–1324 (ESTT…TTSV), 1331–1357 (TFHSRPASTHTTLFTEDSTTSGLTEES), and 1364–1377 (PASTQTGLPATLTT). 2 stretches are compositionally biased toward low complexity: residues 1384 to 1396 (STTFPSSSGSTGT) and 1411 to 1438 (ESTPSRLSPSSTETTTLPGSPTTPSLSE). Positions 1439-1448 (KSTTFYTSPR) are enriched in polar residues. A compositionally biased stretch (low complexity) spans 1458–1481 (TTTSSGVSEESSTSHSQPGSTHTT). Repeat unit 7 spans residues 1466–1484 (EESSTSHSQPGSTHTTAFP). The segment covering 1483–1537 (FPDSTTTSDLSQEPTTSHSSQGSTEATLSPGSTTASSLGQQSTTFHSSPGDTETT) has biased composition (polar residues). Residues 1552 to 1568 (STPTHSSTGSLHTTLTP) are compositionally biased toward low complexity. Composition is skewed to polar residues over residues 1569 to 1586 (ASSTSAGLQEESTTFQSW) and 1606 to 1630 (VSTTYHSRPSSTPTTHFSASSTTLG). Repeat unit 8 spans residues 1633 to 1651 (EESTTVHSSPGATGTALFP). Over residues 1653–1708 (RSATSVLVGEPTTSPISSGSTETTALPGSTTTAGLSEKSTTFYSSPRSPDTTLSPA) the composition is skewed to polar residues. Residues 1709–1724 (STTSSGVSEESTTSHS) are compositionally biased toward low complexity. Residues 1717–1735 (EESTTSHSRPGSTHTTAFP) form repeat 9. 2 stretches are compositionally biased toward polar residues: residues 1725–1797 (RPGS…TTAS) and 1805–1840 (PVHSSTGSPHTTLSPAGSTTRQGESTTFQSWPSSKD). A glycan (N-linked (GlcNAc...) asparagine) is linked at Asn-1793. 2 stretches are compositionally biased toward low complexity: residues 1856-1877 (STTSHGSPSSTPTTHFSASSTT) and 1889-1906 (SSPVATATTPSPARSTTS). Repeat copies occupy residues 1882–1900 (EESTTVHSSPVATATTPSP) and 1910–1928 (EESTAYHSSPGSTQTMHFP). The segment covering 1914–1935 (AYHSSPGSTQTMHFPESSTASG) has biased composition (polar residues). Low complexity predominate over residues 1943–1959 (SHSSTTHTISSPPSTTS). Composition is skewed to polar residues over residues 1967 to 1982 (SYHSSPGSTATTHFPD) and 2011 to 2053 (RSTT…TTFH). The segment covering 2054-2082 (SSPRSPATTLSPASTTSSGVSEESTTSHS) has biased composition (low complexity). Repeat 12 spans residues 2075–2093 (EESTTSHSRPGSTHTTAFP). A compositionally biased stretch (polar residues) spans 2083-2104 (RPGSTHTTAFPDSTTTPGLSRH). Positions 2105 to 2130 (STTSHSSPGSTDTTLLPASTTTSGPS) are enriched in low complexity. 2 stretches are compositionally biased toward polar residues: residues 2131 to 2184 (QEST…TSSG) and 2191 to 2221 (RVHSSTGSPRTTLSPASSTSPGLQGESTAFQ). The segment covering 2222 to 2240 (THPASTHTTPSPPSTATAP) has biased composition (low complexity). The stretch at 2242–2260 (EESTTYHRSPGSTPTTHFP) is repeat 13. Polar residues-rich tracts occupy residues 2243–2267 (ESTTYHRSPGSTPTTHFPASSTTSG) and 2274–2290 (IFHSSPDASGTTPSSAH). 3 stretches are compositionally biased toward low complexity: residues 2291 to 2303 (STTSGRGESTTSR), 2312 to 2324 (TTLPGSTTTPGLS), and 2332 to 2345 (SSPRSPTTTLSPAS). Residues 2354 to 2392 (ESTTSRSQPGSTHSTVSPASTTTPGLSEESTTVYSSSPG) show a composition bias toward polar residues. Over residues 2393 to 2407 (STETTVFPRTPTTSV) the composition is skewed to low complexity. 2 stretches are compositionally biased toward polar residues: residues 2414-2440 (TFHSRPASTHTTLFTEDSTTSGLTEES) and 2447-2460 (PASTQTGLPATLTT). 2 stretches are compositionally biased toward low complexity: residues 2467-2483 (STTFPSSSGSTGTTLSP) and 2494-2521 (ESTPSRLSPSSTETTTLPGSPTTPSLSE). Polar residues predominate over residues 2522–2531 (KSTTFYTSPR). The span at 2541-2564 (TTTSSGVSEESSTSHSQPGSTHTT) shows a compositional bias: low complexity. Copy 14 of the repeat occupies 2549-2567 (EESSTSHSQPGSTHTTAFP). The span at 2566–2578 (FPDSTTTPGLSRH) shows a compositional bias: polar residues. Over residues 2579 to 2604 (STTSHSSPGSTDTTLLPASTTTSGPS) the composition is skewed to low complexity. Polar residues-rich tracts occupy residues 2605–2658 (QEST…TSSG) and 2665–2695 (RVHSSTGSPRTTLSPASSTSPGLQGESTTFQ). The segment covering 2696-2714 (THPASTHTTPSPPSTATAP) has biased composition (low complexity). Copy 15 of the repeat occupies 2716-2734 (EESTTYHRSPGSTPTTHFP). 2 stretches are compositionally biased toward polar residues: residues 2717–2741 (ESTTYHRSPGSTPTTHFPASSTTSG) and 2748–2764 (IFHSSPDASGTTPSSAH). Low complexity-rich tracts occupy residues 2765–2777 (STTSGRGESTTSR), 2786–2798 (TTLPGSTTTPGLS), and 2806–2819 (SSPRSPTTTLSPAS). Composition is skewed to polar residues over residues 2828–2881 (ESTT…TTSV), 2888–2914 (TFHSRPASTHTTLFTEDSTTSGLTEES), and 2921–2934 (PASTQTGLPATLTT). Composition is skewed to low complexity over residues 2941–2957 (STTFPSSSGSTGTTLSP) and 2968–2995 (ESTPSRLSPSSTETTTLPGSPTTPSLSE). The span at 2996 to 3005 (KSTTFYTSPR) shows a compositional bias: polar residues. A compositionally biased stretch (low complexity) spans 3015–3038 (TTTSSGVSEESSTSHSQPGSTHTT). Copy 16 of the repeat occupies 3023–3041 (EESSTSHSQPGSTHTTAFP). Polar residues predominate over residues 3040 to 3094 (FPDSTTTSGLSQEPTASHSSQGSTEATLSPGSTTASSLGQQSTTFHSSPGDTETT). Residues 3109-3125 (STPTHSSTGSLHTTLTP) are compositionally biased toward low complexity. Polar residues-rich tracts occupy residues 3126–3143 (ASSTSAGLQEESTTFQSW) and 3163–3187 (VSTTYHSRPSSTPTTHFSASSTTLG). Repeat unit 17 spans residues 3190-3208 (EESTTVHSSPGATGTALFP). Residues 3210–3265 (RSATSVLVGEPTTSPISSGSTETTALPGSTTTAGLSEKSTTFYSSPRSPDTTLSPA) show a composition bias toward polar residues. The span at 3266–3281 (STTSSGVSEESTTSHS) shows a compositional bias: low complexity. Residues 3274–3292 (EESTTSHSRPGSTHTTAFP) form repeat 18. Polar residues-rich tracts occupy residues 3282-3354 (RPGS…TTAS) and 3362-3397 (PVHSSTGSPHTTLSPAGSTTRQGESTTFQSWPNSKD). Residue Asn-3350 is glycosylated (N-linked (GlcNAc...) asparagine). Composition is skewed to low complexity over residues 3413–3434 (STTSHGSPSSTPTTHFSASSTT) and 3446–3463 (SSPVATATTPSPARSTTS). 2 repeat units span residues 3439–3457 (EESTTVHSSPVATATTPSP) and 3467–3485 (EESTTYHSSPGSTQTMHFP). Positions 3468 to 3482 (ESTTYHSSPGSTQTM) are enriched in polar residues. Positions 3499–3517 (TSHSSTTHTISSAPSTTSA) are enriched in low complexity. Polar residues-rich tracts occupy residues 3524–3539 (SYHSSPGSTATTHFPD) and 3568–3610 (RSTT…TTFH). Over residues 3611-3639 (SSPRSPATTLSPASTTSSGVSEESTTSHS) the composition is skewed to low complexity. Copy 21 of the repeat occupies 3632-3650 (EESTTSHSRPGSTHTTAFP). The segment covering 3640–3661 (RPGSTHTTAFPDSTTTPGLSRH) has biased composition (polar residues). The segment covering 3662 to 3705 (STTSHSSPGSTDTTLLPASTTTSGSSQESTTSHSSSGSTDTALS) has biased composition (low complexity). 2 stretches are compositionally biased toward polar residues: residues 3706 to 3741 (PGSTTALSFGQESTTFHSSPGSTHTTLFPDSTTSSG) and 3748 to 3778 (RVHSSTGSPRTTLSPASSTSPGLQGESTAFQ). A compositionally biased stretch (low complexity) spans 3779–3797 (THPASTHTTPSPPSTATAP). Repeat 22 spans residues 3799–3817 (EESTTYHRSPGSTPTTHFP). Composition is skewed to polar residues over residues 3800 to 3824 (ESTTYHRSPGSTPTTHFPASSTTSG) and 3831 to 3847 (IFHSSPDASGTTPSSAH). 3 stretches are compositionally biased toward low complexity: residues 3848-3860 (STTSGRGESTTSR), 3869-3881 (TTLPGSTTTPGLS), and 3889-3902 (SSPRSPTTTLSPAS). Polar residues-rich tracts occupy residues 3911 to 3963 (ESTT…TTTS), 3971 to 3997 (TFHSRPASTHTTLFTEDSTTSGLTEES), and 4004 to 4017 (PASTQTGLPATLTT). Composition is skewed to low complexity over residues 4024 to 4036 (STTFPSSSGSTGT) and 4051 to 4078 (ESTPSRLSPSSTETTTLPGSPTTPSLSE). Polar residues predominate over residues 4079-4088 (KSTTFYTSPR). The segment covering 4098–4121 (TTTSSGVSEESSTSHSQPGSTHTT) has biased composition (low complexity). Repeat 23 spans residues 4106-4124 (EESSTSHSQPGSTHTTAFP). A compositionally biased stretch (polar residues) spans 4123-4177 (FPDSTTTSGLSQEPTTSHSSQGSTEATLSPGSTTASSLGQQSTTFHSSPGDTETT). The segment covering 4192-4208 (STPTHSSTGSLHTTLTP) has biased composition (low complexity). Polar residues predominate over residues 4209–4226 (ASSTSTGLQEESTTFQSW). Positions 4227–4249 (PSSSDTTPSPPSTTAVPVEVSTT) are enriched in low complexity. The segment covering 4250 to 4270 (YHSRPSSTPTTHFSASSTTLG) has biased composition (polar residues). The stretch at 4273 to 4291 (EESTTVHSSPGATGTALFP) is repeat 24. A compositionally biased stretch (polar residues) spans 4293–4348 (RSATSVLVGEPTTSPISSGSTETTALPGSTTTAGLSEKSTTFYSSPRSPDTTLSPA). Residues 4349–4364 (STTSSGVSEESTTSHS) show a composition bias toward low complexity. Composition is skewed to polar residues over residues 4369–4437 (MHTT…TTAS) and 4445–4480 (PVHSSTGSPHTTLSPAGSTTRQGESTTFQSWPNSKD). The N-linked (GlcNAc...) asparagine glycan is linked to Asn-4433. Low complexity-rich tracts occupy residues 4496–4517 (STTSHGSPSSTPTTHFSASSTT) and 4529–4546 (SSPVATATTPSPARSTTS). Repeat copies occupy residues 4522–4540 (EESTTVHSSPVATATTPSP) and 4550–4568 (EESTTYHSSPGSTQTMHFP). Residues 4551 to 4571 (ESTTYHSSPGSTQTMHFPESN) are compositionally biased toward polar residues. Residue Asn-4571 is glycosylated (N-linked (GlcNAc...) asparagine). Over residues 4582 to 4600 (TSHSSTTHTISSAPSTTSA) the composition is skewed to low complexity. Polar residues-rich tracts occupy residues 4607-4622 (SYHSSPGSTATTHFPD) and 4651-4688 (RSTTSVLLGESTTSPISSGSMETTALPGSTTTPGLSEK). 2 stretches are compositionally biased toward low complexity: residues 4689–4710 (STTFHSSPSSTPTTHFSASSTT) and 4722–4739 (SSPVATATTPSPARSTTS). Tandem repeats lie at residues 4715 to 4733 (EESTTVHSSPVATATTPSP) and 4743 to 4761 (EESTAYHSSPGSTQTMHFP). Positions 4747–4768 (AYHSSPGSTQTMHFPESSTASG) are enriched in polar residues. Positions 4776 to 4792 (SHSSTTHTISSPPSTTS) are enriched in low complexity. 2 stretches are compositionally biased toward polar residues: residues 4800–4814 (SYHSSPGSIATTHFP) and 4887–4917 (SSRSPDQTLSPASMTSSSISGEPTSLYSQAE). Residues 4918–4931 (STHTTAFPASTTTS) show a composition bias toward low complexity. Polar residues-rich tracts occupy residues 4932 to 5024 (GLSQ…STPF) and 5048 to 5061 (STAFHSSSDATGTT). A compositionally biased stretch (low complexity) spans 5094-5112 (SSSTSGLTEESTTFHTSPS). The EGF-like domain occupies 5116-5154 (TIVSTESLETLAPGLCQEGQIWNGKQCVCPQGYVGYQCL). Cys-5144 and Cys-5153 form a disulfide bridge. The SEA domain occupies 5168–5275 (LNATLGMTVK…TRTTLLDPDS (108 aa)). N-linked (GlcNAc...) asparagine glycosylation is found at Asn-5169, Asn-5182, Asn-5197, Asn-5228, and Asn-5264. Residues 5226-5233 (LLNGSIVV) carry the Cleavage motif motif. The helical transmembrane segment at 5381-5401 (GIVGAVMAVLLLALIILIILF) threads the bilayer. At 5402 to 5478 (SLSQRKRHRE…QRPEMVASTV (77 aa)) the chain is on the cytoplasmic side.

As to expression, ubiquitous, with higher expression in colon. Down-regulated in colorectal cancer as well as in the colon of patients with ulcerative colitis (UC) and Crohn's disease (CD).

Its subcellular location is the membrane. Its function is as follows. Involved in epithelial cell protection, adhesion modulation, and signaling. May be involved in epithelial cell growth regulation. Stimulated by both cytokine TNF-alpha and TGF-beta in intestinal epithelium. The protein is Mucin-12 (MUC12) of Homo sapiens (Human).